The sequence spans 227 residues: ATP phosphoribosyltransferase (227 aa).

The protein belongs to the ATP phosphoribosyltransferase family. Short subfamily. Heteromultimer composed of HisG and HisZ subunits.

It is found in the cytoplasm. The enzyme catalyses 1-(5-phospho-beta-D-ribosyl)-ATP + diphosphate = 5-phospho-alpha-D-ribose 1-diphosphate + ATP. It functions in the pathway amino-acid biosynthesis; L-histidine biosynthesis; L-histidine from 5-phospho-alpha-D-ribose 1-diphosphate: step 1/9. In terms of biological role, catalyzes the condensation of ATP and 5-phosphoribose 1-diphosphate to form N'-(5'-phosphoribosyl)-ATP (PR-ATP). Has a crucial role in the pathway because the rate of histidine biosynthesis seems to be controlled primarily by regulation of HisG enzymatic activity. The protein is ATP phosphoribosyltransferase of Bordetella avium (strain 197N).